The primary structure comprises 802 residues: Copper-exporting P-type ATPase (802 aa).

2 consecutive HMA domains span residues Lys5 to Thr70 and Glu72 to Ser138. Positions 16, 19, 83, and 86 each coordinate Cu(+). The next 6 membrane-spanning stretches (helical) occupy residues Leu161 to Asn181, Trp192 to Gly212, Met224 to Val244, Leu256 to Ala276, Tyr411 to Val431, and Pro438 to Ala458. The active-site 4-aspartylphosphate intermediate is Asp495. Residues Asp690 and Asp694 each coordinate Mg(2+). 2 helical membrane passes run Leu748–Leu767 and Val771–Leu790.

The protein belongs to the cation transport ATPase (P-type) (TC 3.A.3) family. Type IB subfamily.

It is found in the cell membrane. It catalyses the reaction Cu(+)(in) + ATP + H2O = Cu(+)(out) + ADP + phosphate + H(+). Functionally, involved in copper export. This chain is Copper-exporting P-type ATPase (copA), found in Staphylococcus aureus (strain N315).